The chain runs to 160 residues: Ribosome-binding factor A (160 aa).

The span at 112-122 (KARQSDEKVRE) shows a compositional bias: basic and acidic residues. Positions 112 to 160 (KARQSDEKVREASAGATYAGEADPYRKPDEDETDTEGAVEADETDDTAK) are disordered. A compositionally biased stretch (acidic residues) spans 141–160 (EDETDTEGAVEADETDDTAK).

This sequence belongs to the RbfA family. As to quaternary structure, monomer. Binds 30S ribosomal subunits, but not 50S ribosomal subunits or 70S ribosomes.

It is found in the cytoplasm. In terms of biological role, one of several proteins that assist in the late maturation steps of the functional core of the 30S ribosomal subunit. Associates with free 30S ribosomal subunits (but not with 30S subunits that are part of 70S ribosomes or polysomes). Required for efficient processing of 16S rRNA. May interact with the 5'-terminal helix region of 16S rRNA. The protein is Ribosome-binding factor A of Streptomyces coelicolor (strain ATCC BAA-471 / A3(2) / M145).